The sequence spans 556 residues: Dihydroxy-acid dehydratase (556 aa).

Residue Asp-78 participates in Mg(2+) binding. Cys-119 is a [2Fe-2S] cluster binding site. 2 residues coordinate Mg(2+): Asp-120 and Lys-121. Lys-121 is subject to N6-carboxylysine. Cys-191 lines the [2Fe-2S] cluster pocket. Position 442 (Glu-442) interacts with Mg(2+). Residue Ser-468 is the Proton acceptor of the active site.

Belongs to the IlvD/Edd family. As to quaternary structure, homodimer. [2Fe-2S] cluster serves as cofactor. Requires Mg(2+) as cofactor.

It catalyses the reaction (2R)-2,3-dihydroxy-3-methylbutanoate = 3-methyl-2-oxobutanoate + H2O. The catalysed reaction is (2R,3R)-2,3-dihydroxy-3-methylpentanoate = (S)-3-methyl-2-oxopentanoate + H2O. Its pathway is amino-acid biosynthesis; L-isoleucine biosynthesis; L-isoleucine from 2-oxobutanoate: step 3/4. The protein operates within amino-acid biosynthesis; L-valine biosynthesis; L-valine from pyruvate: step 3/4. Its function is as follows. Functions in the biosynthesis of branched-chain amino acids. Catalyzes the dehydration of (2R,3R)-2,3-dihydroxy-3-methylpentanoate (2,3-dihydroxy-3-methylvalerate) into 2-oxo-3-methylpentanoate (2-oxo-3-methylvalerate) and of (2R)-2,3-dihydroxy-3-methylbutanoate (2,3-dihydroxyisovalerate) into 2-oxo-3-methylbutanoate (2-oxoisovalerate), the penultimate precursor to L-isoleucine and L-valine, respectively. The chain is Dihydroxy-acid dehydratase from Caldanaerobacter subterraneus subsp. tengcongensis (strain DSM 15242 / JCM 11007 / NBRC 100824 / MB4) (Thermoanaerobacter tengcongensis).